Reading from the N-terminus, the 348-residue chain is Phenylalanine--tRNA ligase alpha subunit (348 aa).

Mg(2+) is bound at residue E259.

This sequence belongs to the class-II aminoacyl-tRNA synthetase family. Phe-tRNA synthetase alpha subunit type 1 subfamily. In terms of assembly, tetramer of two alpha and two beta subunits. It depends on Mg(2+) as a cofactor.

It localises to the cytoplasm. It catalyses the reaction tRNA(Phe) + L-phenylalanine + ATP = L-phenylalanyl-tRNA(Phe) + AMP + diphosphate + H(+). This chain is Phenylalanine--tRNA ligase alpha subunit, found in Levilactobacillus brevis (strain ATCC 367 / BCRC 12310 / CIP 105137 / JCM 1170 / LMG 11437 / NCIMB 947 / NCTC 947) (Lactobacillus brevis).